Consider the following 263-residue polypeptide: Renal glandular kallikrein (263 aa).

Positions 1–18 (MWFLILFLALFLGGIDAA) are cleaved as a signal peptide. A propeptide spans 19-24 (PPVQSR) (activation peptide). Residues 25 to 260 (IIGGFNCEKN…YRSWIKDVMA (236 aa)) enclose the Peptidase S1 domain. Cystine bridges form between C31–C175, C50–C66, C153–C221, C186–C200, and C211–C236. H65 serves as the catalytic Charge relay system. Residue N102 is glycosylated (N-linked (GlcNAc...) asparagine). D121 (charge relay system) is an active-site residue. The Charge relay system role is filled by S215.

It belongs to the peptidase S1 family. Kallikrein subfamily.

The enzyme catalyses Preferential cleavage of Arg-|-Xaa bonds in small molecule substrates. Highly selective action to release kallidin (lysyl-bradykinin) from kininogen involves hydrolysis of Met-|-Xaa or Leu-|-Xaa.. Glandular kallikreins cleave Met-Lys and Arg-Ser bonds in kininogen to release Lys-bradykinin. The sequence is that of Renal glandular kallikrein from Mastomys natalensis (African soft-furred rat).